The chain runs to 408 residues: MNYELLTTENAPVKMWTKGVPVEADARQQLINTAKMPFIFKHIAVMPDVHLGKGSTIGSVIPTKGAIIPAAVGVDIGCGMNALRTALTAADLPENLAELRQAIETAVPHGRTTGRCKRDKGAWENPPVNVDAKWAELEAGYQWLTQKYPRFLNTNNYKHLGTLGTGNHFIEICLDESDQVWIMLHSGSRGIGNAIGTYFIDLAQKEMQETLETLPSRDLAYFMEGTEYFDDYLKAVAWAQLFASLNRDAMMENVVTALQSVMQKTVKQPQTLAMEEINCHHNYVQKELHFGEEIYVTRKGAVSARAGQYGIIPGSMGAKSFIVRGLGNEESFCSCSHGAGRVMSRTKAKKLFSVEDQIRATAHVECRKDAEVIDEIPMAYKDIDAVMAAQSDLVEVIYTLRQVVCVKG.

5 residues coordinate Mn(2+): Asp-75, Cys-78, His-168, His-185, and His-281. Asn-167 to Glu-171 contacts GMP. Residues His-281–Asn-282, Pro-313–Met-316, Ser-320, His-337–Gly-340, and Lys-407 each bind GMP. The GMP-histidine intermediate role is filled by His-337.

It belongs to the RtcB family. In terms of assembly, monomer. Requires Mn(2+) as cofactor.

It catalyses the reaction a 3'-end 3'-phospho-ribonucleotide-RNA + a 5'-end dephospho-ribonucleoside-RNA + GTP = a ribonucleotidyl-ribonucleotide-RNA + GMP + diphosphate. The catalysed reaction is a 3'-end 2',3'-cyclophospho-ribonucleotide-RNA + a 5'-end dephospho-ribonucleoside-RNA + GTP + H2O = a ribonucleotidyl-ribonucleotide-RNA + GMP + diphosphate + H(+). In terms of biological role, GTP-dependent RNA ligase that is involved in RNA repair. Joins RNA with 2',3'-cyclic-phosphate or 3'-phosphate ends to RNA with 5'-hydroxy ends. GTP-dependent RNA ligase that is involved in tRNA repair. Repairs broken tRNA(Asp) and tRNA(Arg) that have been cleaved by colicin E5 or colicin D, respectively. Does not repair damaged 16S rRNA in 30S ribosomal subunits. The chain is RNA-splicing ligase RtcB1 from Escherichia coli (strain ATCC 25922 / DSM 1103 / LMG 8223 / NCIMB 12210 / NCTC 12241 / WDCM 00013 / Seattle 1946).